The primary structure comprises 205 residues: N-(5'-phosphoribosyl)anthranilate isomerase (205 aa).

It belongs to the TrpF family.

It carries out the reaction N-(5-phospho-beta-D-ribosyl)anthranilate = 1-(2-carboxyphenylamino)-1-deoxy-D-ribulose 5-phosphate. Its pathway is amino-acid biosynthesis; L-tryptophan biosynthesis; L-tryptophan from chorismate: step 3/5. The protein is N-(5'-phosphoribosyl)anthranilate isomerase of Maridesulfovibrio salexigens (strain ATCC 14822 / DSM 2638 / NCIMB 8403 / VKM B-1763) (Desulfovibrio salexigens).